The following is a 192-amino-acid chain: Fe/S biogenesis protein NfuA (192 aa).

2 residues coordinate [4Fe-4S] cluster: Cys-149 and Cys-152.

Belongs to the NfuA family. In terms of assembly, homodimer. The cofactor is [4Fe-4S] cluster.

In terms of biological role, involved in iron-sulfur cluster biogenesis. Binds a 4Fe-4S cluster, can transfer this cluster to apoproteins, and thereby intervenes in the maturation of Fe/S proteins. Could also act as a scaffold/chaperone for damaged Fe/S proteins. The sequence is that of Fe/S biogenesis protein NfuA from Shewanella putrefaciens (strain CN-32 / ATCC BAA-453).